Consider the following 886-residue polypeptide: MELRCGGLLFSSRFDSGNLAHVEKVETVSSDGEGVGGVATAPASGSAASPDYEFNVWTRPDCAETEYENGNRSWFYFSVRGGTPGKLIKINIMNMNKQSKLYSQGMAPFVRTLPSRPRWERIRERPTFEMTETQFVLSFVHRFVEGRGATTFFAFCYPFSYSDCQDLLSQLDQRFSENYSTHSSPLDSIYYHRELLCYSLDGLRVDLLTITSCHGLRDDREPRLEQLFPDLGTPRPFRFTGKRIFFLSSRVHPGETPSSFVFNGFLDFILRPDDPRAQTLRRLFVFKLIPMLNPDGVVRGHYRTDSRGVNLNRQYLKPDAVLHPAIYGAKAVLLYHHVHSRLNAKSPTNQQPTLHLPPEAPLSDLEKANNLHNEAHLGQSPDGENPATWPETEPAEEKTDPVWLMPQPIPELEEPAPDTIPPKESGVAYYVDLHGHASKRGCFMYGNSFSDESTQVENMLYPKLISLNSAHFDFQGCNFSEKNMYARDRRDGQSKEGSGRVAIYKASGIIHSYTLECNYNTGRSVNSIPAACHDNGRASPPPPPAFPSRYTVELFEQVGRAMAIAALDMAECNPWPRIVLSEHSSLTNLRAWMLRHVRNSRGLTSAGNMGASKKRGARTPPKSNNSLPVSCSENALSRVRSFSTGTSTGGSSSSQQNSPQMKNSPSFPFHGSRTAGLPGLGSSTQKVSHRVLGPVREPRCSDRRRRQQPLNHRSTTSSLAPSPTLASSGPTSSRNMGSCLLPNSLSLSGSSCSFSSSGDKPEAVMVIGKSLLGAGARIPCIRTRLQARPRLGRSSPPTRRGMRGSSPTSPIPQTRESSELEPGPHSATPGLPQAGPPRPRSAPAFSPISCTLSDSPSRICYSRGLLNQCEVCFVPKSPPLTISPRV.

The 414-residue stretch at 157-570 (YPFSYSDCQD…AMAIAALDMA (414 aa)) folds into the Peptidase M14 domain. Positions 252 and 255 each coordinate Zn(2+). Polar residues predominate over residues 344-353 (AKSPTNQQPT). 2 disordered regions span residues 344–363 (AKSPTNQQPTLHLPPEAPLS) and 374–401 (EAHLGQSPDGENPATWPETEPAEEKTDP). His-434 lines the Zn(2+) pocket. Catalysis depends on Glu-516, which acts as the Proton donor/acceptor. Disordered regions lie at residues 602-737 (GLTS…RNMG) and 783-846 (TRLQ…PAFS). Over residues 621–635 (PKSNNSLPVSCSENA) the composition is skewed to polar residues. Positions 643-654 (STGTSTGGSSSS) are enriched in low complexity. Polar residues predominate over residues 655–666 (QQNSPQMKNSPS). The span at 714-737 (STTSSLAPSPTLASSGPTSSRNMG) shows a compositional bias: low complexity. The segment covering 805–815 (SSPTSPIPQTR) has biased composition (polar residues). The residue at position 841 (Ser-841) is a Phosphoserine.

Belongs to the peptidase M14 family. Zn(2+) serves as cofactor. As to expression, widely expressed. Highly expressed in testis, and moderately in pituitary, brain, eye and kidney.

It localises to the cytoplasm. The protein localises to the cytosol. The protein resides in the nucleus. It is found in the cytoskeleton. Its subcellular location is the spindle. It localises to the midbody. The catalysed reaction is gamma-L-glutamyl-L-glutamyl-[protein] + H2O = L-glutamyl-[protein] + L-glutamate. The enzyme catalyses (L-glutamyl)(n+1)-gamma-L-glutamyl-L-glutamyl-[protein] + H2O = (L-glutamyl)(n)-gamma-L-glutamyl-L-glutamyl-[protein] + L-glutamate. It carries out the reaction C-terminal L-alpha-aminoacyl-L-glutamyl-[tubulin] + H2O = C-terminal L-alpha-aminoacyl-[tubulin] + L-glutamate. It catalyses the reaction C-terminal L-alpha-aminoacyl-L-glutamyl-L-glutamyl-[tubulin] + H2O = C-terminal L-alpha-aminoacyl-L-glutamyl-[tubulin] + L-glutamate. Metallocarboxypeptidase that mediates deglutamylation of tubulin and non-tubulin target proteins. Catalyzes the removal of polyglutamate side chains present on the gamma-carboxyl group of glutamate residues within the C-terminal tail of alpha- and beta-tubulin. Cleaves alpha- and gamma-linked polyglutamate tubulin side-chain, as well as the branching point glutamate. Also catalyzes the removal of alpha-linked glutamate residues from the carboxy-terminus of alpha-tubulin. Mediates deglutamylation of nucleotidyltransferase CGAS, leading to CGAS antiviral defense response activation. This chain is Cytosolic carboxypeptidase-like protein 5, found in Mus musculus (Mouse).